The sequence spans 341 residues: Ferrochelatase (341 aa).

Residues His189 and Glu293 each contribute to the Fe cation site.

Belongs to the ferrochelatase family.

Its subcellular location is the cytoplasm. The enzyme catalyses heme b + 2 H(+) = protoporphyrin IX + Fe(2+). Its pathway is porphyrin-containing compound metabolism; protoheme biosynthesis; protoheme from protoporphyrin-IX: step 1/1. Its function is as follows. Catalyzes the ferrous insertion into protoporphyrin IX. This Pseudomonas fluorescens (strain SBW25) protein is Ferrochelatase.